The following is a 104-amino-acid chain: AVIToxin-VAR2 (104 aa).

Positions 1–19 are cleaved as a signal peptide; the sequence is MRSLLCAPLLLLLLSAGES. Intrachain disulfides connect cysteine 26/cysteine 38, cysteine 32/cysteine 50, cysteine 37/cysteine 78, cysteine 60/cysteine 86, and cysteine 80/cysteine 96.

Belongs to the AVIT (prokineticin) family. As to expression, expressed by the venom gland.

Its subcellular location is the secreted. Potent agonist for both PKR1/PROKR1 and PKR2/PROKR2. Potently contracts gastrointestinal (GI) smooth muscle. This is AVIToxin-VAR2 from Varanus varius (Lace monitor lizard).